The primary structure comprises 104 residues: SOSS complex subunit C (104 aa).

Position 2 is an N-acetylalanine (alanine 2).

Belongs to the SOSS-C family. Component of the SOSS complex, composed of SOSS-B (SOSS-B1/NABP2 or SOSS-B2/NABP1), SOSS-A/INTS3 and SOSS-C/INIP. SOSS complexes containing SOSS-B1/NABP2 are more abundant than complexes containing SOSS-B2/NABP1. Interacts with INTS3; the interaction is direct.

The protein localises to the nucleus. Component of the SOSS complex, a multiprotein complex that functions downstream of the MRN complex to promote DNA repair and G2/M checkpoint. The SOSS complex associates with single-stranded DNA at DNA lesions and influences diverse endpoints in the cellular DNA damage response including cell-cycle checkpoint activation, recombinational repair and maintenance of genomic stability. Required for efficient homologous recombination-dependent repair of double-strand breaks (DSBs) and ATM-dependent signaling pathways. The sequence is that of SOSS complex subunit C (INIP) from Bos taurus (Bovine).